The following is a 726-amino-acid chain: Dipeptidyl-peptidase 5 (726 aa).

Residues 1-19 (MAPAKWLIASLAFASTGLA) form the signal peptide. 2 N-linked (GlcNAc...) asparagine glycosylation sites follow: asparagine 96 and asparagine 252. The segment at 268-292 (VAEPINKRNGPRTPHGIEGASSSPV) is disordered. N-linked (GlcNAc...) asparagine glycosylation occurs at asparagine 485. Catalysis depends on serine 558, which acts as the Charge relay system. A glycan (N-linked (GlcNAc...) asparagine) is linked at asparagine 605. Residues aspartate 641 and histidine 673 each act as charge relay system in the active site. Asparagine 699 carries N-linked (GlcNAc...) asparagine glycosylation.

This sequence belongs to the peptidase S9C family.

It is found in the secreted. Functionally, extracellular dipeptidyl-peptidase which removes N-terminal dipeptides sequentially from polypeptides having unsubstituted N-termini. Contributes to pathogenicity. The polypeptide is Dipeptidyl-peptidase 5 (DPP5) (Arthroderma otae (strain ATCC MYA-4605 / CBS 113480) (Microsporum canis)).